We begin with the raw amino-acid sequence, 240 residues long: Vesicle-associated membrane protein 727 (240 aa).

Topologically, residues 1-215 (MSQKGLIYSF…MWLQSLQMKL (215 aa)) are cytoplasmic. The Longin domain occupies 6-133 (LIYSFVAKGT…NLDREFGPIL (128 aa)). Positions 149–209 (KLSKLKAQIT…RQLRRKMWLQ (61 aa)) constitute a v-SNARE coiled-coil homology domain. A helical; Anchor for type IV membrane protein membrane pass occupies residues 216–236 (MVAGAVFSFILIVWVVACGGF). The Vesicular portion of the chain corresponds to 237–240 (KCSS).

This sequence belongs to the synaptobrevin family. Interacts with subunits of the class C core vacuole/endosome tethering (CORVET) complex including VPS11, VCL1, VPS18, VPS33, VPS3 and VPS8. As to expression, highly expressed in flowers. Detected in leaves, stems and roots.

Its subcellular location is the early endosome membrane. The protein localises to the endosome membrane. In terms of biological role, involved in the targeting and/or fusion of transport vesicles to their target membrane. In Arabidopsis thaliana (Mouse-ear cress), this protein is Vesicle-associated membrane protein 727 (VAMP727).